A 194-amino-acid chain; its full sequence is Adapter protein MecA 2 (194 aa).

It belongs to the MecA family. In terms of assembly, homodimer.

Functionally, enables the recognition and targeting of unfolded and aggregated proteins to the ClpC protease or to other proteins involved in proteolysis. Also involved in Spx degradation by ClpC. Acts negatively in the development of competence by binding ComK and recruiting it to the ClpCP protease. When overexpressed, inhibits sporulation. In Bacillus subtilis (strain 168), this protein is Adapter protein MecA 2 (mecB).